Consider the following 713-residue polypeptide: Meiotic activator RIM4 (713 aa).

Residues 1–90 (MKTEISTADS…TSTSTESRGR (90 aa)) form a disordered region. The segment covering 21-31 (ADSELVIREDI) has biased composition (basic and acidic residues). The span at 50 to 71 (GEDSDTDSDNFLQDPEDDVDEE) shows a compositional bias: acidic residues. Residues 74–90 (GRGTVTTTSTSTESRGR) are compositionally biased toward low complexity. Residues 93–172 (SCIFVASLAA…RRLRCEPAKV (80 aa)) enclose the RRM 1 domain. The tract at residues 276–337 (HQNNGIINND…SDGIYDDEDK (62 aa)) is disordered. Over residues 278–298 (NNGIINNDGSNNNDNNNSNNN) the composition is skewed to low complexity. A compositionally biased stretch (basic and acidic residues) spans 299 to 327 (NREDSRRNGDVIEEECGHVHGSDSEEKLT). Positions 346–420 (RSIFVGQLDK…KTMHVQYKEV (75 aa)) constitute an RRM 2 domain. The tract at residues 524–609 (KSMPNSWSSP…KRYARRSSYG (86 aa)) is disordered. Position 525 is a phosphoserine (Ser-525). Over residues 526 to 546 (MPNSWSSPSSKSVNSENESVN) the composition is skewed to low complexity. Polar residues predominate over residues 563–574 (GRYNAANSFTTY). A compositionally biased stretch (low complexity) spans 575–594 (NNSSAGNSNNNNNNNNSNSN).

Post-translationally, polyubiquitinated by RSP5.

Positive regulator of sporulation-specific genes and of sporulation. Required for premeiotic DNA synthesis and meiotic chromosomal segregation. May act in a nutritional signaling pathway. The protein is Meiotic activator RIM4 (RIM4) of Saccharomyces cerevisiae (strain ATCC 204508 / S288c) (Baker's yeast).